A 654-amino-acid polypeptide reads, in one-letter code: Probable Xaa-Pro aminopeptidase P (654 aa).

Positions 449, 460, 558, and 572 each coordinate Mn(2+).

Belongs to the peptidase M24B family. It depends on Mn(2+) as a cofactor.

The enzyme catalyses Release of any N-terminal amino acid, including proline, that is linked to proline, even from a dipeptide or tripeptide.. In terms of biological role, catalyzes the removal of a penultimate prolyl residue from the N-termini of peptides. This chain is Probable Xaa-Pro aminopeptidase P (ampp), found in Neosartorya fischeri (strain ATCC 1020 / DSM 3700 / CBS 544.65 / FGSC A1164 / JCM 1740 / NRRL 181 / WB 181) (Aspergillus fischerianus).